Reading from the N-terminus, the 146-residue chain is MORN repeat-containing protein 4 (146 aa).

MORN repeat units lie at residues 16–38 (YRGE…DGGT), 39–61 (YLGH…DGSR), 62–84 (YEGE…DNMT), and 85–107 (FEGE…DGSH).

As to quaternary structure, interacts with MYO3A.

It is found in the cytoplasm. The protein localises to the cell projection. Its subcellular location is the filopodium tip. The protein resides in the stereocilium. Plays a role in promoting axonal degeneration following neuronal injury by toxic insult or trauma. This chain is MORN repeat-containing protein 4 (Morn4), found in Mus musculus (Mouse).